Consider the following 694-residue polypeptide: Polyphosphate kinase (694 aa).

Residue asparagine 45 participates in ATP binding. Positions 367 and 397 each coordinate Mg(2+). Catalysis depends on histidine 427, which acts as the Phosphohistidine intermediate. 3 residues coordinate ATP: tyrosine 460, arginine 553, and histidine 580.

Belongs to the polyphosphate kinase 1 (PPK1) family. The cofactor is Mg(2+). In terms of processing, an intermediate of this reaction is the autophosphorylated ppk in which a phosphate is covalently linked to a histidine residue through a N-P bond.

It catalyses the reaction [phosphate](n) + ATP = [phosphate](n+1) + ADP. In terms of biological role, catalyzes the reversible transfer of the terminal phosphate of ATP to form a long-chain polyphosphate (polyP). The protein is Polyphosphate kinase of Campylobacter jejuni (strain RM1221).